The primary structure comprises 62 residues: Omega-lycotoxin-Am1e (62 aa).

The propeptide occupies 1–15 (EDEVEETLPVAEEGR). Intrachain disulfides connect cysteine 19–cysteine 34, cysteine 26–cysteine 39, cysteine 33–cysteine 59, and cysteine 41–cysteine 57.

It belongs to the neurotoxin omega-lctx family. In terms of tissue distribution, expressed by the venom gland.

The protein localises to the secreted. Modulates Cav2.1/CACNA1A voltage-gated calcium channels (P/Q-type currents) in rat cerebellar Purkinje cells and hippocampal CA1-CA3 neurons. At saturating concentrations (&gt;10 nM) decelerates activation kinetics and slightly increases peak amplitude without affecting deactivation kinetics. In vivo, does not cause death when intravenously injected into mice. In rat models, through its activity on Cav2.1/CACNA1A, has an ameliorative effect on memory defects provoked by hyperstimulation of N-methyl-D-aspartate receptors (NMDARs) in the hippocampus. The protein is Omega-lycotoxin-Am1e of Alopecosa marikovskyi (Wolf spider).